A 292-amino-acid polypeptide reads, in one-letter code: Aquaporin-3 (292 aa).

Topologically, residues 1-24 (MGRQKELMNRCGEMLHIRYRLLRQ) are cytoplasmic. Residues 25–42 (ALAECLGTLILVMFGCGS) traverse the membrane as a helical segment. At 43 to 56 (VAQVVLSRGTHGGF) the chain is on the extracellular side. The helical transmembrane segment at 57 to 74 (LTINLAFGFAVTLAILVA) threads the bilayer. Over 75–78 (GQVS) the chain is Cytoplasmic. The discontinuously helical intramembrane region spans 79–92 (GAHLNPAVTFAMCF). The short motif at 83-85 (NPA) is the NPA 1 element. Topologically, residues 93 to 100 (LAREPWIK) are cytoplasmic. A helical membrane pass occupies residues 101–121 (LPIYTLAQTLGAFLGAGIVFG). Topologically, residues 122–159 (LYYDAIWAFAGNELVVSGPNGTAGIFATYPSGHLDMVN) are extracellular. The N-linked (GlcNAc...) asparagine glycan is linked to asparagine 141. The chain crosses the membrane as a helical span at residues 160–177 (GFFDQFIGTAALIVCVLA). The Cytoplasmic segment spans residues 178-189 (IVDPYNNPVPRG). Residues 190-206 (LEAFTVGLVVLVIGTSM) form a helical membrane-spanning segment. Topologically, residues 207–210 (GFNS) are extracellular. The discontinuously helical intramembrane region spans 211–224 (GYAVNPARDFGPRL). The short motif at 215-217 (NPA) is the NPA 2 element. Residues 225–242 (FTALAGWGSEVFTTGQNW) are Extracellular-facing. A helical membrane pass occupies residues 243 to 264 (WWVPIVSPLLGSIGGVFVYQLM). Residues 265 to 292 (IGCHLEQPPPSTEAENVKLAHMKHKEQI) lie on the Cytoplasmic side of the membrane.

The protein belongs to the MIP/aquaporin (TC 1.A.8) family. As to quaternary structure, homotetramer; each monomer provides an independent glycerol/water pore. Could also exist in other oligomeric states. In terms of tissue distribution, detected in kidney medulla and papilla, in collecting duct cells. Detected in colon.

The protein localises to the cell membrane. Its subcellular location is the basolateral cell membrane. It carries out the reaction glycerol(in) = glycerol(out). The catalysed reaction is H2O(in) = H2O(out). It catalyses the reaction urea(in) = urea(out). The enzyme catalyses H2O2(out) = H2O2(in). Channel activity is inhibited by mercury ions. Its function is as follows. Aquaglyceroporins form homotetrameric transmembrane channels, with each monomer independently mediating glycerol and water transport across the plasma membrane along their osmotic gradient. Could also be permeable to urea. Also participates in cell permeability to H2O2 and H2O2-mediated signaling. In skin, transports glycerol to the epidermis and stratum corneum, where it maintains hydration, elasticity, and supports lipid biosynthesis for barrier repair. In kidney, contributes to the reabsorption of water, helping the body maintain proper fluid balance. The polypeptide is Aquaporin-3 (Rattus norvegicus (Rat)).